The chain runs to 365 residues: UDP-N-acetylglucosamine--N-acetylmuramyl-(pentapeptide) pyrophosphoryl-undecaprenol N-acetylglucosamine transferase (365 aa).

UDP-N-acetyl-alpha-D-glucosamine is bound by residues 19–21 (TGG), Asn131, Arg170, Ser201, Ile255, 274–279 (ALTVTE), and Gln300.

The protein belongs to the glycosyltransferase 28 family. MurG subfamily.

It is found in the cell inner membrane. The catalysed reaction is di-trans,octa-cis-undecaprenyl diphospho-N-acetyl-alpha-D-muramoyl-L-alanyl-D-glutamyl-meso-2,6-diaminopimeloyl-D-alanyl-D-alanine + UDP-N-acetyl-alpha-D-glucosamine = di-trans,octa-cis-undecaprenyl diphospho-[N-acetyl-alpha-D-glucosaminyl-(1-&gt;4)]-N-acetyl-alpha-D-muramoyl-L-alanyl-D-glutamyl-meso-2,6-diaminopimeloyl-D-alanyl-D-alanine + UDP + H(+). It functions in the pathway cell wall biogenesis; peptidoglycan biosynthesis. In terms of biological role, cell wall formation. Catalyzes the transfer of a GlcNAc subunit on undecaprenyl-pyrophosphoryl-MurNAc-pentapeptide (lipid intermediate I) to form undecaprenyl-pyrophosphoryl-MurNAc-(pentapeptide)GlcNAc (lipid intermediate II). The polypeptide is UDP-N-acetylglucosamine--N-acetylmuramyl-(pentapeptide) pyrophosphoryl-undecaprenol N-acetylglucosamine transferase (Acinetobacter baylyi (strain ATCC 33305 / BD413 / ADP1)).